The primary structure comprises 444 residues: Phosphoglucosamine mutase (444 aa).

S101 serves as the catalytic Phosphoserine intermediate. Mg(2+) is bound by residues S101, D240, D242, and D244. The residue at position 101 (S101) is a Phosphoserine.

Belongs to the phosphohexose mutase family. It depends on Mg(2+) as a cofactor. Activated by phosphorylation.

It catalyses the reaction alpha-D-glucosamine 1-phosphate = D-glucosamine 6-phosphate. Its function is as follows. Catalyzes the conversion of glucosamine-6-phosphate to glucosamine-1-phosphate. The protein is Phosphoglucosamine mutase of Aeromonas salmonicida (strain A449).